A 158-amino-acid chain; its full sequence is MIRIGHGFDVHAFGEDRPLIIGGVEVPYHTGFIAHSDGDVALHALTDAILGAAALGDIGKLFPDTDMQYKNADSRGLLREAFRQVQEKGYKIGNVDITIIAQAPKMRPHIDAMRAKIAEDILCDIEQVNVKATTTEKLGFTGRQEGIACEAVALLIRQ.

A divalent metal cation is bound by residues Asp-9 and His-11. Residues 9 to 11 and 35 to 36 each bind 4-CDP-2-C-methyl-D-erythritol 2-phosphate; these read DVH and HS. A divalent metal cation is bound at residue His-43. Residues 57 to 59, 62 to 66, 133 to 136, Phe-140, and Arg-143 each bind 4-CDP-2-C-methyl-D-erythritol 2-phosphate; these read DIG, FPDTD, and TTTE.

The protein belongs to the IspF family. In terms of assembly, homotrimer. A divalent metal cation serves as cofactor.

The enzyme catalyses 4-CDP-2-C-methyl-D-erythritol 2-phosphate = 2-C-methyl-D-erythritol 2,4-cyclic diphosphate + CMP. It participates in isoprenoid biosynthesis; isopentenyl diphosphate biosynthesis via DXP pathway; isopentenyl diphosphate from 1-deoxy-D-xylulose 5-phosphate: step 4/6. Functionally, involved in the biosynthesis of isopentenyl diphosphate (IPP) and dimethylallyl diphosphate (DMAPP), two major building blocks of isoprenoid compounds. Catalyzes the conversion of 4-diphosphocytidyl-2-C-methyl-D-erythritol 2-phosphate (CDP-ME2P) to 2-C-methyl-D-erythritol 2,4-cyclodiphosphate (ME-CPP) with a corresponding release of cytidine 5-monophosphate (CMP). This Haemophilus influenzae (strain 86-028NP) protein is 2-C-methyl-D-erythritol 2,4-cyclodiphosphate synthase.